Here is a 246-residue protein sequence, read N- to C-terminus: Putative outer membrane protein YiaT (246 aa).

The N-terminal stretch at 1 to 21 (MLINRNIVALFALPFMASATA) is a signal peptide.

The protein belongs to the MipA/OmpV family.

It is found in the cell outer membrane. This chain is Putative outer membrane protein YiaT (yiaT), found in Escherichia coli (strain K12).